Consider the following 382-residue polypeptide: ATP phosphoribosyltransferase regulatory subunit (382 aa).

It belongs to the class-II aminoacyl-tRNA synthetase family. HisZ subfamily. Heteromultimer composed of HisG and HisZ subunits.

It localises to the cytoplasm. The protein operates within amino-acid biosynthesis; L-histidine biosynthesis; L-histidine from 5-phospho-alpha-D-ribose 1-diphosphate: step 1/9. Functionally, required for the first step of histidine biosynthesis. May allow the feedback regulation of ATP phosphoribosyltransferase activity by histidine. The polypeptide is ATP phosphoribosyltransferase regulatory subunit (Acidovorax sp. (strain JS42)).